The sequence spans 252 residues: Ferritin-2, chloroplastic (252 aa).

The N-terminal 43 residues, 1-43, are a transit peptide targeting the chloroplast; it reads MMLRVSSSPAAAVANHLSGGAAATTAPARVTAQRSGVSLSAAA. The extension peptide (EP) stretch occupies residues 44-80; it reads AAGKGKEVLSGVVFQPFEEIKGELALVPQSPDRSLAR. Residues 81–234 form the Ferritin-like diiron domain; the sequence is HKFVDDCEAA…KYVAQLRRVG (154 aa). Fe cation is bound by residues Glu98, Glu133, His136, Glu182, and Gln216.

The protein belongs to the ferritin family. As to quaternary structure, oligomer of 24 subunits. There are two types of subunits: L (light) chain and H (heavy) chain. The major chain can be light or heavy, depending on the species and tissue type. The functional molecule forms a roughly spherical shell with a diameter of 12 nm and contains a central cavity into which the insoluble mineral iron core is deposited. As to expression, ferritins accumulate in seed during maturation. Then, they are degraded during the first days of germination. Present in roots and leaves after iron treatment.

It localises to the plastid. Its subcellular location is the chloroplast. The enzyme catalyses 4 Fe(2+) + O2 + 4 H(+) = 4 Fe(3+) + 2 H2O. Its function is as follows. Stores iron in a soluble, non-toxic, readily available form. Important for iron homeostasis. Has ferroxidase activity. Iron is taken up in the ferrous form and deposited as ferric hydroxides after oxidation. The polypeptide is Ferritin-2, chloroplastic (FER2) (Zea mays (Maize)).